Consider the following 154-residue polypeptide: Ascorbate-specific PTS system EIIA component (154 aa).

Positions 6 to 150 constitute a PTS EIIA type-2 domain; the sequence is SLAENNSIRL…QEVLDLIDRT (145 aa). The Tele-phosphohistidine intermediate role is filled by His-68. His-68 is subject to Phosphohistidine.

It localises to the cytoplasm. Its function is as follows. The phosphoenolpyruvate-dependent sugar phosphotransferase system (sugar PTS), a major carbohydrate active transport system, catalyzes the phosphorylation of incoming sugar substrates concomitantly with their translocation across the cell membrane. The enzyme II UlaABC PTS system is involved in ascorbate transport. The polypeptide is Ascorbate-specific PTS system EIIA component (ulaC) (Salmonella choleraesuis (strain SC-B67)).